Consider the following 119-residue polypeptide: uncharacterized protein (119 aa).

Residues 64–119 are disordered; sequence SAPLGLKEVQKKSNEGLNEVQGAADINKQKRPANSQDSSSVEGDIQNFLEKVTGKN. Positions 95–104 are enriched in polar residues; that stretch reads PANSQDSSSV.

This is an uncharacterized protein from Nostoc sp. (strain PCC 7120 / SAG 25.82 / UTEX 2576).